A 470-amino-acid polypeptide reads, in one-letter code: Flavin-containing monooxygenase FMO GS-OX-like 6 (470 aa).

Residue 17–22 (GAGAAG) coordinates FAD. 214–219 (GYQSSG) is a binding site for NADP(+).

It belongs to the FMO family. It depends on FAD as a cofactor.

Its function is as follows. Catalyzes the conversion of methylthioalkyl glucosinolates of any chain length into methylsulfinylalkyl glucosinolates. This is Flavin-containing monooxygenase FMO GS-OX-like 6 from Arabidopsis thaliana (Mouse-ear cress).